Reading from the N-terminus, the 303-residue chain is 5'-3' exonuclease (303 aa).

The 5'-3' exonuclease domain maps to 179 to 262 (ISPAQWVDVK…LATITTEIEA (84 aa)).

In terms of biological role, 5'-3' exonuclease acting preferentially on double-stranded DNA. The chain is 5'-3' exonuclease from Halalkalibacterium halodurans (strain ATCC BAA-125 / DSM 18197 / FERM 7344 / JCM 9153 / C-125) (Bacillus halodurans).